Consider the following 479-residue polypeptide: mRNA export factor ICP27 homolog (479 aa).

Residues 1-15 show a composition bias toward low complexity; the sequence is MVPSQRLSRTSSISS. 2 disordered regions span residues 1-78 and 92-210; these read MVPS…SSVV and KWDL…NKPW. A compositionally biased stretch (acidic residues) spans 35–44; it reads TDCDMDPMEG. A compositionally biased stretch (basic and acidic residues) spans 132-142; it reads EVHGCTDESYG. Zn(2+) is bound by residues Cys-354, His-445, Cys-449, and Cys-454. The segment at 354–454 adopts a CHC2-type zinc-finger fold; that stretch reads CFLPNTRDYN…HTRDCRSASC (101 aa).

The protein belongs to the HHV-1 ICP27 protein family. As to quaternary structure, interacts with host XPO1 and with the XPO1 export pathway components small GTPase RAN and nucleoporin NUP214. Interacts with host SPEN, OTT1 and OTT3. Interacts with host SRSF1, SRSF3, SRSF7 and SRPK1. Interacts with host DHX9; this interaction may have an inhibitory effect on virion production. Interacts (via N-terminus) with host NXF1; this interaction plays a role in mRNA export. In terms of processing, phosphorylated by cellular protein kinase CK2.

It is found in the host nucleus. The protein localises to the host cytoplasm. In terms of biological role, promotes the nuclear export of a subset of early and late viral mRNAs by interacting with mRNAs and cellular export proteins. Additionally may prevent the establishment of cellular antiviral state, by acting as an alternative splicing factor for cellular RNAs such as STAT1, resulting in a STAT1 mRNA incapable of producing the STAT1alpha isoform. The protein is mRNA export factor ICP27 homolog of Homo sapiens (Human).